A 173-amino-acid chain; its full sequence is Alpha-crystallin A chain (173 aa).

Methionine 1 carries the N-acetylmethionine modification. Positions 1–63 (MDIAIQHPWF…RTVLDSGISE (63 aa)) are required for complex formation with BFSP1 and BFSP2. A Deamidated glutamine; partial modification is found at glutamine 6. Serine 45 is subject to Phosphoserine. Position 50 is a deamidated glutamine; partial (glutamine 50). Residues 52–162 (LFRTVLDSGI…GHSERAIPVS (111 aa)) enclose the sHSP domain. Position 70 is an N6-acetyllysine (lysine 70). Glutamine 90 is modified (deamidated glutamine; partial). Lysine 99 carries the N6-acetyllysine modification. Histidine 100 is a Zn(2+) binding site. The residue at position 101 (asparagine 101) is a Deamidated asparagine; partial. The Zn(2+) site is built by glutamate 102 and histidine 107. Serine 122 is subject to Phosphoserine. Asparagine 123 carries the post-translational modification Deamidated asparagine; partial. Positions 144-173 (PKIPSGMDAGHSERAIPVSREEKPGSAPSS) are disordered. Residues 153-167 (GHSERAIPVSREEKP) are compositionally biased toward basic and acidic residues. Zn(2+) is bound at residue histidine 154. A glycan (O-linked (GlcNAc) serine) is linked at serine 162.

Belongs to the small heat shock protein (HSP20) family. In terms of assembly, heteromer composed of three CRYAA and one CRYAB subunits. Inter-subunit bridging via zinc ions enhances stability, which is crucial as there is no protein turn over in the lens. Can also form homodimers and homotetramers (dimers of dimers) which serve as the building blocks of homooligomers. Within homooligomers, the zinc-binding motif is created from residues of 3 different molecules. His-100 and Glu-102 from one molecule are ligands of the zinc ion, and His-107 and His-154 residues from additional molecules complete the site with tetrahedral coordination geometry. Part of a complex required for lens intermediate filament formation composed of BFSP1, BFSP2 and CRYAA. Acetylation at Lys-70 may increase chaperone activity. Post-translationally, undergoes age-dependent proteolytical cleavage at the C-terminus.

It is found in the cytoplasm. The protein resides in the nucleus. In terms of biological role, contributes to the transparency and refractive index of the lens. Acts as a chaperone, preventing aggregation of various proteins under a wide range of stress conditions. Required for the correct formation of lens intermediate filaments as part of a complex composed of BFSP1, BFSP2 and CRYAA. In Equus caballus (Horse), this protein is Alpha-crystallin A chain (CRYAA).